The sequence spans 192 residues: UPF0312 protein Pput_4854 (192 aa).

Positions 1–23 (MLKKTFAALALGTALLSAGQAMA) are cleaved as a signal peptide.

The protein belongs to the UPF0312 family. Type 1 subfamily.

It localises to the periplasm. This Pseudomonas putida (strain ATCC 700007 / DSM 6899 / JCM 31910 / BCRC 17059 / LMG 24140 / F1) protein is UPF0312 protein Pput_4854.